The chain runs to 283 residues: Bifunctional protein FolD (283 aa).

Residue 166–168 (GAS) participates in NADP(+) binding.

The protein belongs to the tetrahydrofolate dehydrogenase/cyclohydrolase family. Homodimer.

The catalysed reaction is (6R)-5,10-methylene-5,6,7,8-tetrahydrofolate + NADP(+) = (6R)-5,10-methenyltetrahydrofolate + NADPH. The enzyme catalyses (6R)-5,10-methenyltetrahydrofolate + H2O = (6R)-10-formyltetrahydrofolate + H(+). It functions in the pathway one-carbon metabolism; tetrahydrofolate interconversion. Its function is as follows. Catalyzes the oxidation of 5,10-methylenetetrahydrofolate to 5,10-methenyltetrahydrofolate and then the hydrolysis of 5,10-methenyltetrahydrofolate to 10-formyltetrahydrofolate. In Coxiella burnetii (strain CbuK_Q154) (Coxiella burnetii (strain Q154)), this protein is Bifunctional protein FolD.